The following is an 85-amino-acid chain: Large ribosomal subunit protein bL27 (85 aa).

Positions Met-1 to Leu-21 are disordered.

Belongs to the bacterial ribosomal protein bL27 family.

The protein is Large ribosomal subunit protein bL27 of Chromohalobacter salexigens (strain ATCC BAA-138 / DSM 3043 / CIP 106854 / NCIMB 13768 / 1H11).